The sequence spans 120 residues: Large ribosomal subunit protein bL20 (120 aa).

Belongs to the bacterial ribosomal protein bL20 family.

In terms of biological role, binds directly to 23S ribosomal RNA and is necessary for the in vitro assembly process of the 50S ribosomal subunit. It is not involved in the protein synthesizing functions of that subunit. In Cereibacter sphaeroides (strain ATCC 17029 / ATH 2.4.9) (Rhodobacter sphaeroides), this protein is Large ribosomal subunit protein bL20.